The primary structure comprises 194 residues: BCL2/adenovirus E1B 19 kDa protein-interacting protein 3 (194 aa).

A disordered region spans residues 1 to 102 (MSQNGAPGMQ…SQSEEDDIER (102 aa)). Residues 42–55 (DMEKILLDAQHESG) are compositionally biased toward basic and acidic residues. 5 positions are modified to phosphoserine: Ser54, Ser66, Ser86, Ser92, and Ser95. The span at 56–69 (RSSSKSSHCDSPPR) shows a compositional bias: low complexity. The span at 78 to 88 (RASETDTHSIG) shows a compositional bias: basic and acidic residues. The BH3 signature appears at 100 to 125 (IERRKEVESILKKNSDWIWDWSSRPE). The chain crosses the membrane as a helical span at residues 164–184 (VFLPSLLLSHLLAIGLGIYIG).

It belongs to the NIP3 family. In terms of assembly, homodimer. Binds to BCL2. Interacts with BNIP3L and ACAA2. Interacts (via BH3 domain) with SPATA18 (via coiled-coil domains). Interacts with BOK; promotes BOK oligomerization. Interacts with PPTC7; this interaction promotes BNIP3 degradation. (Microbial infection) Interacts with adenovirus E1B 19 kDa protein. As to quaternary structure, (Microbial infection) Interacts with Epstein-Barr virus BHRF1.

The protein localises to the mitochondrion. It localises to the mitochondrion outer membrane. Its function is as follows. Apoptosis-inducing protein that can overcome BCL2 suppression. May play a role in repartitioning calcium between the two major intracellular calcium stores in association with BCL2. Involved in mitochondrial quality control via its interaction with SPATA18/MIEAP: in response to mitochondrial damage, participates in mitochondrial protein catabolic process (also named MALM) leading to the degradation of damaged proteins inside mitochondria. The physical interaction of SPATA18/MIEAP, BNIP3 and BNIP3L/NIX at the mitochondrial outer membrane regulates the opening of a pore in the mitochondrial double membrane in order to mediate the translocation of lysosomal proteins from the cytoplasm to the mitochondrial matrix. Plays an important role in the calprotectin (S100A8/A9)-induced cell death pathway. This Homo sapiens (Human) protein is BCL2/adenovirus E1B 19 kDa protein-interacting protein 3.